A 339-amino-acid chain; its full sequence is Ureidoglycine carbamoyltransferase (339 aa).

This sequence belongs to the aspartate/ornithine carbamoyltransferase superfamily. In terms of assembly, homodimer.

It catalyses the reaction (S)-2-ureidoglycine + carbamoyl phosphate = allantoate + phosphate + H(+). The protein operates within purine metabolism. Its function is as follows. Catalyzes the phosphorolysis of allantoate to ureidoglycine and carbamoyl phosphate. Is likely involved in a purine degradation pathway. The chain is Ureidoglycine carbamoyltransferase from Rubrobacter xylanophilus (strain DSM 9941 / JCM 11954 / NBRC 16129 / PRD-1).